Consider the following 174-residue polypeptide: RNA pyrophosphohydrolase (174 aa).

A Nudix hydrolase domain is found at 6-149 (GFRANVGIII…KRDVYRKVMK (144 aa)). The Nudix box motif lies at 38–59 (GGVDDGETAEEAMYRELYEEVG).

It belongs to the Nudix hydrolase family. RppH subfamily. The cofactor is a divalent metal cation.

Its function is as follows. Accelerates the degradation of transcripts by removing pyrophosphate from the 5'-end of triphosphorylated RNA, leading to a more labile monophosphorylated state that can stimulate subsequent ribonuclease cleavage. This Shewanella sp. (strain MR-7) protein is RNA pyrophosphohydrolase.